The sequence spans 447 residues: ATP-dependent protease ATPase subunit HslU (447 aa).

Residues Ile17, 59–64 (GVGKTE), Asp256, Glu321, and Arg393 each bind ATP.

The protein belongs to the ClpX chaperone family. HslU subfamily. As to quaternary structure, a double ring-shaped homohexamer of HslV is capped on each side by a ring-shaped HslU homohexamer. The assembly of the HslU/HslV complex is dependent on binding of ATP.

Its subcellular location is the cytoplasm. ATPase subunit of a proteasome-like degradation complex; this subunit has chaperone activity. The binding of ATP and its subsequent hydrolysis by HslU are essential for unfolding of protein substrates subsequently hydrolyzed by HslV. HslU recognizes the N-terminal part of its protein substrates and unfolds these before they are guided to HslV for hydrolysis. This chain is ATP-dependent protease ATPase subunit HslU, found in Pseudomonas putida (strain ATCC 47054 / DSM 6125 / CFBP 8728 / NCIMB 11950 / KT2440).